Reading from the N-terminus, the 98-residue chain is NADH-ubiquinone oxidoreductase chain 4L (98 aa).

3 helical membrane passes run 1-21 (MSLV…GLLM), 29-49 (SLLC…LMIL), and 61-81 (IILL…LVMV).

It belongs to the complex I subunit 4L family. Core subunit of respiratory chain NADH dehydrogenase (Complex I) which is composed of 45 different subunits.

Its subcellular location is the mitochondrion inner membrane. The enzyme catalyses a ubiquinone + NADH + 5 H(+)(in) = a ubiquinol + NAD(+) + 4 H(+)(out). In terms of biological role, core subunit of the mitochondrial membrane respiratory chain NADH dehydrogenase (Complex I) which catalyzes electron transfer from NADH through the respiratory chain, using ubiquinone as an electron acceptor. Part of the enzyme membrane arm which is embedded in the lipid bilayer and involved in proton translocation. The protein is NADH-ubiquinone oxidoreductase chain 4L (MT-ND4L) of Pantholops hodgsonii (Chiru).